We begin with the raw amino-acid sequence, 908 residues long: Auxin response factor 6 (908 aa).

The tract at residues 1–21 is disordered; the sequence is MKLSPSAGGVSDQPPSPPEVA. The TF-B3 DNA-binding region spans 134-236; sequence FCKTLTASDT…QLLLGIRRAN (103 aa). The segment at 525–556 is disordered; sequence NEQKPQLQPQQQQQESHQQQPQHQQMQQQKHL. A compositionally biased stretch (low complexity) spans 526-556; that stretch reads EQKPQLQPQQQQQESHQQQPQHQQMQQQKHL. The PB1 domain maps to 777-861; the sequence is ATFVKVYKSG…SCIKILSPQE (85 aa).

The protein belongs to the ARF family. Homodimers and heterodimers.

The protein localises to the nucleus. In terms of biological role, auxin response factors (ARFs) are transcriptional factors that bind specifically to the DNA sequence 5'-TGTCTC-3' found in the auxin-responsive promoter elements (AuxREs). This Oryza sativa subsp. indica (Rice) protein is Auxin response factor 6 (ARF6).